We begin with the raw amino-acid sequence, 671 residues long: DNA ligase (671 aa).

NAD(+) is bound by residues 32–36 (DAEYD), 81–82 (SL), and E113. K115 acts as the N6-AMP-lysine intermediate in catalysis. NAD(+)-binding residues include R136, E173, K290, and K314. C408, C411, C426, and C432 together coordinate Zn(2+). The 79-residue stretch at 593–671 (EIDSPFAGKT…EAEMLRLLGS (79 aa)) folds into the BRCT domain.

Belongs to the NAD-dependent DNA ligase family. LigA subfamily. Mg(2+) is required as a cofactor. Mn(2+) serves as cofactor.

The enzyme catalyses NAD(+) + (deoxyribonucleotide)n-3'-hydroxyl + 5'-phospho-(deoxyribonucleotide)m = (deoxyribonucleotide)n+m + AMP + beta-nicotinamide D-nucleotide.. Its function is as follows. DNA ligase that catalyzes the formation of phosphodiester linkages between 5'-phosphoryl and 3'-hydroxyl groups in double-stranded DNA using NAD as a coenzyme and as the energy source for the reaction. It is essential for DNA replication and repair of damaged DNA. The chain is DNA ligase from Escherichia coli O157:H7.